The sequence spans 161 residues: N5-carboxyaminoimidazole ribonucleotide mutase (161 aa).

Serine 9, aspartate 12, and arginine 39 together coordinate substrate.

It belongs to the AIR carboxylase family. Class I subfamily.

It carries out the reaction 5-carboxyamino-1-(5-phospho-D-ribosyl)imidazole + H(+) = 5-amino-1-(5-phospho-D-ribosyl)imidazole-4-carboxylate. It functions in the pathway purine metabolism; IMP biosynthesis via de novo pathway; 5-amino-1-(5-phospho-D-ribosyl)imidazole-4-carboxylate from 5-amino-1-(5-phospho-D-ribosyl)imidazole (N5-CAIR route): step 2/2. Catalyzes the conversion of N5-carboxyaminoimidazole ribonucleotide (N5-CAIR) to 4-carboxy-5-aminoimidazole ribonucleotide (CAIR). This is N5-carboxyaminoimidazole ribonucleotide mutase from Aliivibrio fischeri (strain ATCC 700601 / ES114) (Vibrio fischeri).